Here is a 269-residue protein sequence, read N- to C-terminus: Putative pyruvate, phosphate dikinase regulatory protein (269 aa).

Position 147-154 (147-154) interacts with ADP; the sequence is GLSRTSKT.

It belongs to the pyruvate, phosphate/water dikinase regulatory protein family. PDRP subfamily.

It carries out the reaction N(tele)-phospho-L-histidyl/L-threonyl-[pyruvate, phosphate dikinase] + ADP = N(tele)-phospho-L-histidyl/O-phospho-L-threonyl-[pyruvate, phosphate dikinase] + AMP + H(+). It catalyses the reaction N(tele)-phospho-L-histidyl/O-phospho-L-threonyl-[pyruvate, phosphate dikinase] + phosphate + H(+) = N(tele)-phospho-L-histidyl/L-threonyl-[pyruvate, phosphate dikinase] + diphosphate. Its function is as follows. Bifunctional serine/threonine kinase and phosphorylase involved in the regulation of the pyruvate, phosphate dikinase (PPDK) by catalyzing its phosphorylation/dephosphorylation. In Clostridium botulinum (strain ATCC 19397 / Type A), this protein is Putative pyruvate, phosphate dikinase regulatory protein.